The following is a 555-amino-acid chain: Dihydroxy-acid dehydratase (555 aa).

Aspartate 78 contributes to the Mg(2+) binding site. Cysteine 119 lines the [2Fe-2S] cluster pocket. Mg(2+) contacts are provided by aspartate 120 and lysine 121. Lysine 121 bears the N6-carboxylysine mark. Cysteine 191 contacts [2Fe-2S] cluster. Position 444 (glutamate 444) interacts with Mg(2+). Catalysis depends on serine 470, which acts as the Proton acceptor.

This sequence belongs to the IlvD/Edd family. In terms of assembly, homodimer. [2Fe-2S] cluster serves as cofactor. The cofactor is Mg(2+).

It catalyses the reaction (2R)-2,3-dihydroxy-3-methylbutanoate = 3-methyl-2-oxobutanoate + H2O. The catalysed reaction is (2R,3R)-2,3-dihydroxy-3-methylpentanoate = (S)-3-methyl-2-oxopentanoate + H2O. It participates in amino-acid biosynthesis; L-isoleucine biosynthesis; L-isoleucine from 2-oxobutanoate: step 3/4. The protein operates within amino-acid biosynthesis; L-valine biosynthesis; L-valine from pyruvate: step 3/4. Its function is as follows. Functions in the biosynthesis of branched-chain amino acids. Catalyzes the dehydration of (2R,3R)-2,3-dihydroxy-3-methylpentanoate (2,3-dihydroxy-3-methylvalerate) into 2-oxo-3-methylpentanoate (2-oxo-3-methylvalerate) and of (2R)-2,3-dihydroxy-3-methylbutanoate (2,3-dihydroxyisovalerate) into 2-oxo-3-methylbutanoate (2-oxoisovalerate), the penultimate precursor to L-isoleucine and L-valine, respectively. In Nitratidesulfovibrio vulgaris (strain DSM 19637 / Miyazaki F) (Desulfovibrio vulgaris), this protein is Dihydroxy-acid dehydratase.